A 445-amino-acid polypeptide reads, in one-letter code: Phosphoglucosamine mutase (445 aa).

The Phosphoserine intermediate role is filled by S102. Mg(2+)-binding residues include S102, D241, D243, and D245. Position 102 is a phosphoserine (S102).

Belongs to the phosphohexose mutase family. Mg(2+) serves as cofactor. In terms of processing, activated by phosphorylation.

The enzyme catalyses alpha-D-glucosamine 1-phosphate = D-glucosamine 6-phosphate. Its function is as follows. Catalyzes the conversion of glucosamine-6-phosphate to glucosamine-1-phosphate. In Citrobacter koseri (strain ATCC BAA-895 / CDC 4225-83 / SGSC4696), this protein is Phosphoglucosamine mutase.